The following is a 308-amino-acid chain: Transaldolase (308 aa).

The active-site Schiff-base intermediate with substrate is Lys125.

The protein belongs to the transaldolase family. Type 1 subfamily. As to quaternary structure, homodimer.

It localises to the cytoplasm. It carries out the reaction D-sedoheptulose 7-phosphate + D-glyceraldehyde 3-phosphate = D-erythrose 4-phosphate + beta-D-fructose 6-phosphate. It functions in the pathway carbohydrate degradation; pentose phosphate pathway; D-glyceraldehyde 3-phosphate and beta-D-fructose 6-phosphate from D-ribose 5-phosphate and D-xylulose 5-phosphate (non-oxidative stage): step 2/3. In terms of biological role, transaldolase is important for the balance of metabolites in the pentose-phosphate pathway. The chain is Transaldolase from Pseudomonas putida (strain ATCC 47054 / DSM 6125 / CFBP 8728 / NCIMB 11950 / KT2440).